Here is a 247-residue protein sequence, read N- to C-terminus: ATP synthase subunit a, chloroplastic (247 aa).

A run of 5 helical transmembrane segments spans residues 38–58 (QVLI…TIAV), 95–115 (VPFI…GALL), 134–154 (INTT…AGLT), 199–219 (LVVV…VMFL), and 220–240 (GLFT…AYIG).

Belongs to the ATPase A chain family. F-type ATPases have 2 components, CF(1) - the catalytic core - and CF(0) - the membrane proton channel. CF(1) has five subunits: alpha(3), beta(3), gamma(1), delta(1), epsilon(1). CF(0) has four main subunits: a, b, b' and c.

It is found in the plastid. Its subcellular location is the chloroplast thylakoid membrane. In terms of biological role, key component of the proton channel; it plays a direct role in the translocation of protons across the membrane. The protein is ATP synthase subunit a, chloroplastic of Panax ginseng (Korean ginseng).